The following is a 1588-amino-acid chain: Pentafunctional AROM polypeptide (1588 aa).

Positions Met-1 to Asp-392 are 3-dehydroquinate synthase. Residues Asp-43–Asn-45, Glu-78–Lys-81, Gly-109–Val-111, and Asp-114 contribute to the NAD(+) site. Position 125 (Arg-125) interacts with 7-phospho-2-dehydro-3-deoxy-D-arabino-heptonate. Residue Thr-134–Ser-135 coordinates NAD(+). Asp-141 and Lys-147 together coordinate 7-phospho-2-dehydro-3-deoxy-D-arabino-heptonate. Lys-156 serves as a coordination point for NAD(+). 7-phospho-2-dehydro-3-deoxy-D-arabino-heptonate is bound at residue Asn-157. Residues Trp-174–Thr-177 and Asn-185 each bind NAD(+). Glu-189 contributes to the Zn(2+) binding site. Residues Glu-189–Lys-192 and Lys-258 each bind 7-phospho-2-dehydro-3-deoxy-D-arabino-heptonate. The active-site Proton acceptor; for 3-dehydroquinate synthase activity is the Glu-268. 7-phospho-2-dehydro-3-deoxy-D-arabino-heptonate is bound by residues Arg-272–Asn-276 and His-279. His-279 is a binding site for Zn(2+). Residue His-283 is the Proton acceptor; for 3-dehydroquinate synthase activity of the active site. 2 residues coordinate 7-phospho-2-dehydro-3-deoxy-D-arabino-heptonate: His-295 and Lys-364. Zn(2+) is bound at residue His-295. The tract at residues Val-405–Ala-871 is EPSP synthase. The active-site For EPSP synthase activity is Cys-853. The shikimate kinase stretch occupies residues Ser-890 to Cys-1080. Position 895 to 902 (Gly-895 to Thr-902) interacts with ATP. Positions Leu-1081–Gln-1293 are 3-dehydroquinase. The active-site Proton acceptor; for 3-dehydroquinate dehydratase activity is the His-1198. The active-site Schiff-base intermediate with substrate; for 3-dehydroquinate dehydratase activity is the Lys-1227. The shikimate dehydrogenase stretch occupies residues Pro-1306–Glu-1588.

It in the N-terminal section; belongs to the sugar phosphate cyclases superfamily. Dehydroquinate synthase family. In the 2nd section; belongs to the EPSP synthase family. The protein in the 3rd section; belongs to the shikimate kinase family. This sequence in the 4th section; belongs to the type-I 3-dehydroquinase family. It in the C-terminal section; belongs to the shikimate dehydrogenase family. In terms of assembly, homodimer. The cofactor is Zn(2+).

The protein resides in the cytoplasm. It catalyses the reaction 7-phospho-2-dehydro-3-deoxy-D-arabino-heptonate = 3-dehydroquinate + phosphate. The catalysed reaction is 3-dehydroquinate = 3-dehydroshikimate + H2O. It carries out the reaction shikimate + NADP(+) = 3-dehydroshikimate + NADPH + H(+). The enzyme catalyses shikimate + ATP = 3-phosphoshikimate + ADP + H(+). It catalyses the reaction 3-phosphoshikimate + phosphoenolpyruvate = 5-O-(1-carboxyvinyl)-3-phosphoshikimate + phosphate. It functions in the pathway metabolic intermediate biosynthesis; chorismate biosynthesis; chorismate from D-erythrose 4-phosphate and phosphoenolpyruvate: step 2/7. Its pathway is metabolic intermediate biosynthesis; chorismate biosynthesis; chorismate from D-erythrose 4-phosphate and phosphoenolpyruvate: step 3/7. The protein operates within metabolic intermediate biosynthesis; chorismate biosynthesis; chorismate from D-erythrose 4-phosphate and phosphoenolpyruvate: step 4/7. It participates in metabolic intermediate biosynthesis; chorismate biosynthesis; chorismate from D-erythrose 4-phosphate and phosphoenolpyruvate: step 5/7. It functions in the pathway metabolic intermediate biosynthesis; chorismate biosynthesis; chorismate from D-erythrose 4-phosphate and phosphoenolpyruvate: step 6/7. In terms of biological role, the AROM polypeptide catalyzes 5 consecutive enzymatic reactions in prechorismate polyaromatic amino acid biosynthesis. This is Pentafunctional AROM polypeptide from Saccharomyces cerevisiae (strain YJM789) (Baker's yeast).